An 831-amino-acid chain; its full sequence is Translation initiation factor IF-2 (831 aa).

Residues 329-499 (TRAPVVTVMG…LLISEMQDLK (171 aa)) enclose the tr-type G domain. Residues 338–345 (GHVDHGKT) are G1. A GTP-binding site is contributed by 338–345 (GHVDHGKT). A G2 region spans residues 363–367 (GITQH). Positions 385 to 388 (DTPG) are G3. GTP contacts are provided by residues 385 to 389 (DTPGH) and 439 to 442 (NKID). The tract at residues 439–442 (NKID) is G4. The tract at residues 475 to 477 (SAL) is G5.

The protein belongs to the TRAFAC class translation factor GTPase superfamily. Classic translation factor GTPase family. IF-2 subfamily.

Its subcellular location is the cytoplasm. Functionally, one of the essential components for the initiation of protein synthesis. Protects formylmethionyl-tRNA from spontaneous hydrolysis and promotes its binding to the 30S ribosomal subunits. Also involved in the hydrolysis of GTP during the formation of the 70S ribosomal complex. This is Translation initiation factor IF-2 from Rickettsia typhi (strain ATCC VR-144 / Wilmington).